Here is a 938-residue protein sequence, read N- to C-terminus: Glutamate receptor ionotropic, NMDA 1 (938 aa).

A signal peptide spans 1–18 (MSTMRLLTLALLFSCSVA). Residues 19 to 559 (RAACDPKIVN…TLDSFMQPFQ (541 aa)) lie on the Extracellular side of the membrane. N-linked (GlcNAc...) asparagine glycosylation is found at N61, N203, N239, N276, N300, N350, N368, N440, N471, and N491. C79 and C308 are disulfide-bonded. 2 disulfides stabilise this stretch: C420–C454 and C436–C455. P516, T518, and R523 together coordinate glycine. A helical transmembrane segment spans residues 560–580 (STLWLLVGLSVHVVAVMLYLL). Topologically, residues 581–604 (DRFSPFGRFKVNSEEEEEDALTLS) are cytoplasmic. The tract at residues 603–624 (LSSAMWFSWGVLLNSGIGEGAP) is pore-forming. The discontinuously helical intramembrane region spans 605–615 (SAMWFSWGVLL). The Cytoplasmic portion of the chain corresponds to 616–627 (NSGIGEGAPRSF). The chain crosses the membrane as a helical span at residues 628–648 (SARILGMVWAGFAMIIVASYT). The Extracellular segment spans residues 649–811 (ANLAAFLVLD…SNAPATLTFE (163 aa)). A glycan (N-linked (GlcNAc...) asparagine) is linked at N674. Glycine is bound by residues S688 and D732. C744 and C798 form a disulfide bridge. The N-linked (GlcNAc...) asparagine glycan is linked to N771. The chain crosses the membrane as a helical span at residues 812–835 (NMAGVFMLVAGGIVAGIFLIFIEI). The Cytoplasmic segment spans residues 836-938 (AYKRHKDARR…LQLCSRHRES (103 aa)). S889, S890, S896, and S897 each carry phosphoserine; by PKC. The interval 889–938 (SSFKRRRSSKDTSTGGGRGALQNQKDTVLPRRAIEREEGQLQLCSRHRES) is disordered. A compositionally biased stretch (basic and acidic residues) spans 916-927 (VLPRRAIEREEG).

The protein belongs to the glutamate-gated ion channel (TC 1.A.10.1) family. NR1/GRIN1 subfamily. In terms of assembly, heterotetramer; the NMDAR subunits are modular and harbor tiered domains that function in concert to regulate opening and closing of the cation-selective ion channel pore. Forms heterotetrameric channels composed of two GluN1/zeta subunits (GRIN1), and two identical GluN2/epsilon subunits (GRIN2A, GRIN2B, GRIN2C or GRIN2D) or GluN3 subunits (GRIN3A or GRIN3B) (in vitro). Can also form heterotetrameric channels that contain at least two GluN1 subunits and at least two different GluN2 subunits (or a combination of one GluN2 and one GluN3 subunits) (in vitro). In vivo, the subunit composition may vary in function of the expression levels of the different subunits. Found in a complex with GRIN2A or GRIN2B, GRIN3A and PPP2CB. Found in a complex with GRIN2A or GRIN2B and GRIN3B. Interacts with SNX27 (via PDZ domain); the interaction is required for recycling to the plasma membrane when endocytosed and prevent degradation in lysosomes. Interacts with DLG4 and MPDZ. Interacts with LRFN1 and LRFN2. Interacts with MYZAP. Found in a complex with DLG4 and PRR7. Found in a complex with GRIN2B and PRR7. Interacts with PRR7; the interaction is reduced following NMDA receptor activity. Post-translationally, NMDA is probably regulated by C-terminal phosphorylation of an isoform of GRIN1 by PKC. Dephosphorylated on Ser-897 probably by protein phosphatase 2A (PPP2CB). Its phosphorylated state is influenced by the formation of the NMDAR-PPP2CB complex and the NMDAR channel activity.

Its subcellular location is the cell membrane. It is found in the postsynaptic cell membrane. It localises to the postsynaptic density membrane. The protein resides in the synaptic cell membrane. It carries out the reaction Ca(2+)(in) = Ca(2+)(out). The enzyme catalyses Na(+)(in) = Na(+)(out). It catalyses the reaction K(+)(in) = K(+)(out). Its activity is regulated as follows. NMDA glutamate receptor activity is inhbited by Mg2(+) in a voltage-dependent manner; Mg2(+)-induced blockade occurs only at negative potentials and decreases with membrane depolarization. 7-chlorokynurenate (50 uM) or Zn2(+) (100 uM) partially inhibit the NMDA glutamate receptor activity, while acide 2-amino-5-phosphonovalerique(100 uM) almost completely blocked the NMDA glutamate receptor activity. Dizocilpine (1 uM) results in long lasting and almost complete block of the NMDA glutamate receptor activity. Component of N-methyl-D-aspartate (NMDA) receptors (NMDARs) that function as heterotetrameric, ligand-gated cation channels with high calcium permeability and voltage-dependent block by Mg(2+). NMDARs participate in synaptic plasticity for learning and memory formation by contributing to the long-term potentiation (LTP). Channel activation requires binding of the neurotransmitter L-glutamate to the GluN2 subunit, glycine or D-serine binding to the GluN1 subunit, plus membrane depolarization to eliminate channel inhibition by Mg(2+). NMDARs mediate simultaneously the potasium efflux and the influx of calcium and sodium. Each GluN2 or GluN3 subunit confers differential attributes to channel properties, including activation, deactivation and desensitization kinetics, pH sensitivity, Ca2(+) permeability, and binding to allosteric modulators. This chain is Glutamate receptor ionotropic, NMDA 1, found in Homo sapiens (Human).